Consider the following 349-residue polypeptide: Ornithine carbamoyltransferase, mitochondrial (349 aa).

Carbamoyl phosphate is bound by residues 73–76 (STRT), R124, H151, and Q154. N195, D261, S265, and M266 together coordinate L-ornithine. Residue C303 is the Proton acceptor of the active site. Carbamoyl phosphate is bound by residues 303–304 (CL) and R330.

This sequence belongs to the aspartate/ornithine carbamoyltransferase superfamily. OTCase family. Homotrimer.

The protein localises to the mitochondrion matrix. The catalysed reaction is carbamoyl phosphate + L-ornithine = L-citrulline + phosphate + H(+). Its pathway is amino-acid biosynthesis; L-arginine biosynthesis; L-arginine from L-ornithine and carbamoyl phosphate: step 1/3. The polypeptide is Ornithine carbamoyltransferase, mitochondrial (Coccidioides immitis (strain RS) (Valley fever fungus)).